The primary structure comprises 147 residues: Large ribosomal subunit protein uL15 (147 aa).

Residues 1–13 (MELHSLKAAEGSR) are compositionally biased toward basic and acidic residues. The segment at 1 to 57 (MELHSLKAAEGSRKVRNRVGRGTSSGNGKTSGRGQKGQKSRSGGGVRPGFEGGQTEL) is disordered. Composition is skewed to gly residues over residues 23 to 35 (TSSG…GRGQ) and 42 to 52 (SGGGVRPGFEG).

Belongs to the universal ribosomal protein uL15 family. Part of the 50S ribosomal subunit.

Its function is as follows. Binds to the 23S rRNA. The sequence is that of Large ribosomal subunit protein uL15 from Lactococcus lactis subsp. lactis (strain IL1403) (Streptococcus lactis).